The primary structure comprises 248 residues: 2,3-bisphosphoglycerate-dependent phosphoglycerate mutase (248 aa).

Substrate-binding positions include 8-15 (RHGESVWN), 21-22 (TG), arginine 60, 87-90 (ERHY), lysine 98, and 114-115 (RR). Histidine 9 serves as the catalytic Tele-phosphohistidine intermediate. Glutamate 87 functions as the Proton donor/acceptor in the catalytic mechanism. Residues 116-135 (SYDTPPPPMEVSDPRHPSHD) are disordered. 183–184 (GN) lines the substrate pocket.

It belongs to the phosphoglycerate mutase family. BPG-dependent PGAM subfamily. As to quaternary structure, homodimer.

The catalysed reaction is (2R)-2-phosphoglycerate = (2R)-3-phosphoglycerate. It participates in carbohydrate degradation; glycolysis; pyruvate from D-glyceraldehyde 3-phosphate: step 3/5. Its function is as follows. Catalyzes the interconversion of 2-phosphoglycerate and 3-phosphoglycerate. This Bdellovibrio bacteriovorus (strain ATCC 15356 / DSM 50701 / NCIMB 9529 / HD100) protein is 2,3-bisphosphoglycerate-dependent phosphoglycerate mutase.